Here is a 574-residue protein sequence, read N- to C-terminus: Sorting nexin-33 (574 aa).

The SH3 domain occupies Met-1 to Ser-61. A disordered region spans residues Ala-68 to Asp-119. Phosphoserine is present on residues Ser-77 and Ser-92. A compositionally biased stretch (acidic residues) spans Phe-109 to Asp-119. The 111-residue stretch at Phe-230–Gln-340 folds into the PX domain. Residues Leu-371–Leu-574 enclose the BAR domain.

This sequence belongs to the sorting nexin family. Homodimer (via BAR domain). Interacts with ADAM15. Interacts with FASLG. Interacts (via SH3 domain) with DNM1 and DNM2. Interacts with WASL. Interacts with FCHSD1 (via the F-BAR domain). Post-translationally, phosphorylated. Detected in heart and pancreas.

The protein localises to the cytoplasm. It localises to the cytosol. Its subcellular location is the membrane. The protein resides in the cytoplasmic vesicle membrane. Functionally, plays a role in the reorganization of the cytoskeleton, endocytosis and cellular vesicle trafficking via its interactions with membranes, WASL, DNM1 and DNM2. Acts both during interphase and at the end of mitotic cell divisions. Required for efficient progress through mitosis and cytokinesis. Required for normal formation of the cleavage furrow at the end of mitosis. Modulates endocytosis of cell-surface proteins, such as APP and PRNP; this then modulates the secretion of APP and PRNP peptides. Promotes membrane tubulation (in vitro). May promote the formation of macropinosomes. This chain is Sorting nexin-33 (SNX33), found in Homo sapiens (Human).